Reading from the N-terminus, the 474-residue chain is UDP-glycosyltransferase 71C2 (474 aa).

Residues S293, A352–Q354, H369–E377, and Y391–Q394 contribute to the UDP-alpha-D-glucose site.

This sequence belongs to the UDP-glycosyltransferase family.

Functionally, possesses low quercetin 3-O-glucosyltransferase, 7-O-glucosyltransferase and 3'-O-glucosyltransferase activities in vitro. Glucosylates other secondary metabolites in vitro like vanillin, trans-resveratrol, curumin and etoposide. This is UDP-glycosyltransferase 71C2 (UGT71C2) from Arabidopsis thaliana (Mouse-ear cress).